Here is a 421-residue protein sequence, read N- to C-terminus: Ribulose bisphosphate carboxylase large chain (421 aa).

The substrate site is built by Asn-68 and Thr-118. The Proton acceptor role is filled by Lys-120. Lys-122 lines the substrate pocket. Mg(2+) is bound by residues Lys-146, Asp-148, and Glu-149. Lys-146 is subject to N6-carboxylysine. The active-site Proton acceptor is the His-239. Positions 240, 272, and 324 each coordinate substrate.

This sequence belongs to the RuBisCO large chain family. Type I subfamily. As to quaternary structure, heterohexadecamer of 8 large chains and 8 small chains; disulfide-linked. The disulfide link is formed within the large subunit homodimers. It depends on Mg(2+) as a cofactor. In terms of processing, the disulfide bond which can form in the large chain dimeric partners within the hexadecamer appears to be associated with oxidative stress and protein turnover.

It is found in the plastid. Its subcellular location is the chloroplast. The catalysed reaction is 2 (2R)-3-phosphoglycerate + 2 H(+) = D-ribulose 1,5-bisphosphate + CO2 + H2O. It carries out the reaction D-ribulose 1,5-bisphosphate + O2 = 2-phosphoglycolate + (2R)-3-phosphoglycerate + 2 H(+). In terms of biological role, ruBisCO catalyzes two reactions: the carboxylation of D-ribulose 1,5-bisphosphate, the primary event in carbon dioxide fixation, as well as the oxidative fragmentation of the pentose substrate in the photorespiration process. Both reactions occur simultaneously and in competition at the same active site. The sequence is that of Ribulose bisphosphate carboxylase large chain (rbcL) from Aegilops tauschii (Tausch's goatgrass).